The sequence spans 800 residues: Protocadherin beta-10 (800 aa).

The signal sequence occupies residues 1 to 26 (MAVRELCFPRQRQVLFLFLFWGVSLA). The Extracellular portion of the chain corresponds to 27–692 (GSGFGRYSVT…AEADLLTVYL (666 aa)). Cadherin domains follow at residues 35-133 (VTEE…APVF), 138-242 (TVLK…APQF), 247-347 (YETQ…PPEL), 352-451 (FSNS…APAF), and 456-561 (YTLF…SPFV). Residues Asn169 and Asn181 are each glycosylated (N-linked (GlcNAc...) asparagine). N-linked (GlcNAc...) asparagine glycans are attached at residues Asn418 and Asn436. Asn567 is a glycosylation site (N-linked (GlcNAc...) asparagine). Residues 568 to 671 (GSAPCTELVP…LVDGFSQPYL (104 aa)) form the Cadherin 6 domain. The chain crosses the membrane as a helical span at residues 693 to 713 (VVALASVSSLFLLSVLLFVAV). Topologically, residues 714–800 (RLCRRSRAAS…FRNSFGFNIQ (87 aa)) are cytoplasmic.

The protein resides in the cell membrane. Functionally, potential calcium-dependent cell-adhesion protein. May be involved in the establishment and maintenance of specific neuronal connections in the brain. The chain is Protocadherin beta-10 (PCDHB10) from Homo sapiens (Human).